Reading from the N-terminus, the 570-residue chain is Dihydroxy-acid dehydratase (570 aa).

A disordered region spans residues 1-25; it reads MSQQDSPANADHRRRHSSIVVDGPG. C60 serves as a coordination point for [2Fe-2S] cluster. D92 provides a ligand contact to Mg(2+). Residue C133 participates in [2Fe-2S] cluster binding. D134 and K135 together coordinate Mg(2+). Position 135 is an N6-carboxylysine (K135). A [2Fe-2S] cluster-binding site is contributed by C202. E453 serves as a coordination point for Mg(2+). Residue S479 is the Proton acceptor of the active site.

This sequence belongs to the IlvD/Edd family. Homodimer. It depends on [2Fe-2S] cluster as a cofactor. Mg(2+) is required as a cofactor.

It carries out the reaction (2R)-2,3-dihydroxy-3-methylbutanoate = 3-methyl-2-oxobutanoate + H2O. The enzyme catalyses (2R,3R)-2,3-dihydroxy-3-methylpentanoate = (S)-3-methyl-2-oxopentanoate + H2O. It functions in the pathway amino-acid biosynthesis; L-isoleucine biosynthesis; L-isoleucine from 2-oxobutanoate: step 3/4. Its pathway is amino-acid biosynthesis; L-valine biosynthesis; L-valine from pyruvate: step 3/4. In terms of biological role, functions in the biosynthesis of branched-chain amino acids. Catalyzes the dehydration of (2R,3R)-2,3-dihydroxy-3-methylpentanoate (2,3-dihydroxy-3-methylvalerate) into 2-oxo-3-methylpentanoate (2-oxo-3-methylvalerate) and of (2R)-2,3-dihydroxy-3-methylbutanoate (2,3-dihydroxyisovalerate) into 2-oxo-3-methylbutanoate (2-oxoisovalerate), the penultimate precursor to L-isoleucine and L-valine, respectively. This is Dihydroxy-acid dehydratase from Chromohalobacter salexigens (strain ATCC BAA-138 / DSM 3043 / CIP 106854 / NCIMB 13768 / 1H11).